We begin with the raw amino-acid sequence, 462 residues long: Argininosuccinate lyase (462 aa).

It belongs to the lyase 1 family. Argininosuccinate lyase subfamily.

Its subcellular location is the cytoplasm. The enzyme catalyses 2-(N(omega)-L-arginino)succinate = fumarate + L-arginine. Its pathway is amino-acid biosynthesis; L-arginine biosynthesis; L-arginine from L-ornithine and carbamoyl phosphate: step 3/3. The sequence is that of Argininosuccinate lyase from Streptococcus agalactiae serotype V (strain ATCC BAA-611 / 2603 V/R).